The primary structure comprises 140 residues: Large ribosomal subunit protein uL11 (140 aa).

Belongs to the universal ribosomal protein uL11 family. Part of the ribosomal stalk of the 50S ribosomal subunit. Interacts with L10 and the large rRNA to form the base of the stalk. L10 forms an elongated spine to which L12 dimers bind in a sequential fashion forming a multimeric L10(L12)X complex. One or more lysine residues are methylated.

In terms of biological role, forms part of the ribosomal stalk which helps the ribosome interact with GTP-bound translation factors. This Caldanaerobacter subterraneus subsp. tengcongensis (strain DSM 15242 / JCM 11007 / NBRC 100824 / MB4) (Thermoanaerobacter tengcongensis) protein is Large ribosomal subunit protein uL11.